Here is a 395-residue protein sequence, read N- to C-terminus: Fractalkine (395 aa).

Positions 1 to 24 (MAPSPLAWLLRLAAFFHLCTLLPG) are cleaved as a signal peptide. The interval 25–100 (QHLGMTKCEI…HQAAALTKNG (76 aa)) is chemokine and involved in interaction with ITGAV:ITGB3 and ITGA4:ITGB1. Residues 25-336 (QHLGMTKCEI…TPVPDTQAAT (312 aa)) are Extracellular-facing. Cystine bridges form between Cys32–Cys58 and Cys36–Cys74. Residues 101–336 (GKFEKRVDNV…TPVPDTQAAT (236 aa)) form a mucin-like stalk region. Polar residues-rich tracts occupy residues 148 to 172 (ARGT…TSEA) and 201 to 210 (AVYQSGSSSW). Disordered regions lie at residues 148-180 (ARGT…LTAK) and 201-305 (AVYQ…SGSQ). The segment covering 218-236 (SPSTTAPSPQVSTTSPSTP) has biased composition (low complexity). The helical transmembrane segment at 337–357 (RRQAVGLLAFLGLLFCLGVAM) threads the bilayer. Residues 358-395 (FAYQSLQGCPRKMAGEMVEGLRYVPRSCGSNSYVLVPV) lie on the Cytoplasmic side of the membrane.

This sequence belongs to the intercrine delta family. Monomer. Forms a ternary complex with CX3CR1 and ITGAV:ITGB3 or ITGA4:ITGB1. In terms of processing, a soluble short 80 kDa form may be released by proteolytic cleavage from the long membrane-anchored form. Highest levels in brain. Lower levels in kidney, heart and lung. Also found in skeletal muscle and testis. Highly expressed in lesional smooth muscle cells, but not macrophages. Low levels of ABCD-3 mRNA were also found in anti-CD40-stimulated splenic B-cells, but not in resting B-cells. Also expressed in dendritic cells.

The protein resides in the cell membrane. It is found in the secreted. Chemokine that acts as a ligand for both CX3CR1 and integrins ITGAV:ITGB3 and ITGA4:ITGB1. The CX3CR1-CX3CL1 signaling exerts distinct functions in different tissue compartments, such as immune response, inflammation, cell adhesion and chemotaxis. Regulates leukocyte adhesion and migration processes at the endothelium. Can activate integrins in both a CX3CR1-dependent and CX3CR1-independent manner. In the presence of CX3CR1, activates integrins by binding to the classical ligand-binding site (site 1) in integrins. In the absence of CX3CR1, binds to a second site (site 2) in integrins which is distinct from site 1 and enhances the binding of other integrin ligands to site 1. Functionally, the soluble form is chemotactic for T-cells and monocytes, but not for neutrophils. Its function is as follows. The membrane-bound form promotes adhesion of those leukocytes to endothelial cells. This is Fractalkine from Mus musculus (Mouse).